Reading from the N-terminus, the 445-residue chain is Probable D-serine dehydratase (445 aa).

Lys111 is modified (N6-(pyridoxal phosphate)lysine).

This sequence belongs to the serine/threonine dehydratase family. DsdA subfamily. Requires pyridoxal 5'-phosphate as cofactor.

The enzyme catalyses D-serine = pyruvate + NH4(+). In Burkholderia pseudomallei (strain K96243), this protein is Probable D-serine dehydratase.